The following is a 386-amino-acid chain: Protein RETICULATA-RELATED 4, chloroplastic (386 aa).

The N-terminal 61 residues, M1–S61, are a transit peptide targeting the chloroplast. The disordered stretch occupies residues S61–D99. Residues G65–G85 show a composition bias toward gly residues. The segment covering G86 to D99 has biased composition (basic and acidic residues). A run of 2 helical transmembrane segments spans residues V201–A221 and K273–I293.

This sequence belongs to the RETICULATA family.

It localises to the plastid. The protein localises to the chloroplast membrane. Its function is as follows. May play a role in leaf development. The sequence is that of Protein RETICULATA-RELATED 4, chloroplastic from Arabidopsis thaliana (Mouse-ear cress).